Consider the following 75-residue polypeptide: MNPVINYDELLKKIPYKFAIPIAVAKRAENLKEFAHSYVETWDNNYVSIALKELSEGYIRIKNEEILKVLIPNVK.

The protein belongs to the RNA polymerase subunit omega family. In terms of assembly, the RNAP catalytic core consists of 2 alpha, 1 beta, 1 beta' and 1 omega subunit. When a sigma factor is associated with the core the holoenzyme is formed, which can initiate transcription.

It catalyses the reaction RNA(n) + a ribonucleoside 5'-triphosphate = RNA(n+1) + diphosphate. Promotes RNA polymerase assembly. Latches the N- and C-terminal regions of the beta' subunit thereby facilitating its interaction with the beta and alpha subunits. The polypeptide is DNA-directed RNA polymerase subunit omega (Thermosipho melanesiensis (strain DSM 12029 / CIP 104789 / BI429)).